Consider the following 147-residue polypeptide: Acidic phospholipase A2 S7-48J (147 aa).

The N-terminal stretch at 1 to 19 is a signal peptide; that stretch reads MYPAHLLVLLAVCVSLLGA. The propeptide occupies 20–27; it reads SDIPPQPL. 7 disulfide bridges follow: Cys-38-Cys-99, Cys-54-Cys-146, Cys-56-Cys-72, Cys-71-Cys-127, Cys-78-Cys-120, Cys-88-Cys-113, and Cys-106-Cys-118. Positions 55, 57, and 59 each coordinate Ca(2+). Residue His-75 is part of the active site. Asp-76 is a binding site for Ca(2+). The active site involves Asp-121.

Belongs to the phospholipase A2 family. Group I subfamily. D49 sub-subfamily. The cofactor is Ca(2+). Expressed by the venom gland.

The protein resides in the secreted. The catalysed reaction is a 1,2-diacyl-sn-glycero-3-phosphocholine + H2O = a 1-acyl-sn-glycero-3-phosphocholine + a fatty acid + H(+). In terms of biological role, snake venom phospholipase A2 (PLA2) that inhibits collagen-induced platelet aggregation. PLA2 catalyzes the calcium-dependent hydrolysis of the 2-acyl groups in 3-sn-phosphoglycerides. In Austrelaps superbus (Lowland copperhead snake), this protein is Acidic phospholipase A2 S7-48J.